The sequence spans 982 residues: Bifunctional glutamine synthetase adenylyltransferase/adenylyl-removing enzyme (982 aa).

The adenylyl removase stretch occupies residues 1–460; it reads MSLPSLANLP…HFRQVIADPD (460 aa). The adenylyl transferase stretch occupies residues 473–982; the sequence is GAEWIPLWEE…IRIWRELRLG (510 aa).

Belongs to the GlnE family. Mg(2+) is required as a cofactor.

It carries out the reaction [glutamine synthetase]-O(4)-(5'-adenylyl)-L-tyrosine + phosphate = [glutamine synthetase]-L-tyrosine + ADP. It catalyses the reaction [glutamine synthetase]-L-tyrosine + ATP = [glutamine synthetase]-O(4)-(5'-adenylyl)-L-tyrosine + diphosphate. Involved in the regulation of glutamine synthetase GlnA, a key enzyme in the process to assimilate ammonia. When cellular nitrogen levels are high, the C-terminal adenylyl transferase (AT) inactivates GlnA by covalent transfer of an adenylyl group from ATP to specific tyrosine residue of GlnA, thus reducing its activity. Conversely, when nitrogen levels are low, the N-terminal adenylyl removase (AR) activates GlnA by removing the adenylyl group by phosphorolysis, increasing its activity. The regulatory region of GlnE binds the signal transduction protein PII (GlnB) which indicates the nitrogen status of the cell. In Pseudomonas aeruginosa (strain ATCC 15692 / DSM 22644 / CIP 104116 / JCM 14847 / LMG 12228 / 1C / PRS 101 / PAO1), this protein is Bifunctional glutamine synthetase adenylyltransferase/adenylyl-removing enzyme.